A 387-amino-acid chain; its full sequence is MNRHHLQDHFLEIDKKNCCVFRDDFIAKVLPPVLGLEFIFGLLGNGLALWIFCFHLKSWKSSRIFLFNLAVADFLLIICLPFVMDYYVRRSDWKFGDIPCRLVLFMFAMNRQGSIIFLTVVAVDRYFRVVHPHHALNKISNWTAAIISCLLWGITVGLTVHLLKKKLLIQNGTANVCISFSICHTFRWHEAMFLLEFFLPLGIILFCSARIIWSLRQRQMDRHAKIKRAITFIMVVAIVFVICFLPSVVVRIHIFWLLHTSGTQNCEVYRSVDLAFFITLSFTYMNSMLDPVVYYFSSPSFPNFFSTLINRCLQRKITGEPDNNRSTSVELTGDPNKTRGAPEALIANSGEPWSPSYLGPTSNNHSKKGHCHQEPASLEKQLGCCIE.

Topologically, residues 1 to 28 (MNRHHLQDHFLEIDKKNCCVFRDDFIAK) are extracellular. Residues 29–50 (VLPPVLGLEFIFGLLGNGLALW) form a helical membrane-spanning segment. Over 51 to 63 (IFCFHLKSWKSSR) the chain is Cytoplasmic. Residues 64–85 (IFLFNLAVADFLLIICLPFVMD) form a helical membrane-spanning segment. Residues 86-102 (YYVRRSDWKFGDIPCRL) are Extracellular-facing. A disulfide bond links Cys100 and Cys177. Residues 103-123 (VLFMFAMNRQGSIIFLTVVAV) form a helical membrane-spanning segment. At 124–142 (DRYFRVVHPHHALNKISNW) the chain is on the cytoplasmic side. Residues 143–163 (TAAIISCLLWGITVGLTVHLL) form a helical membrane-spanning segment. Residues 164–194 (KKKLLIQNGTANVCISFSICHTFRWHEAMFL) lie on the Extracellular side of the membrane. The chain crosses the membrane as a helical span at residues 195 to 209 (LEFFLPLGIILFCSA). Residues 210–236 (RIIWSLRQRQMDRHAKIKRAITFIMVV) lie on the Cytoplasmic side of the membrane. Residues 237 to 256 (AIVFVICFLPSVVVRIHIFW) form a helical membrane-spanning segment. The Extracellular segment spans residues 257–273 (LLHTSGTQNCEVYRSVD). The helical transmembrane segment at 274 to 298 (LAFFITLSFTYMNSMLDPVVYYFSS) threads the bilayer. Topologically, residues 299 to 387 (PSFPNFFSTL…LEKQLGCCIE (89 aa)) are cytoplasmic. The tract at residues 319–343 (GEPDNNRSTSVELTGDPNKTRGAPE) is disordered.

This sequence belongs to the G-protein coupled receptor 1 family. Expression largely restricted to adipose tissue and spleen.

The protein resides in the cell membrane. Its function is as follows. Receptor for 3-OH-octanoid acid mediates a negative feedback regulation of adipocyte lipolysis to counteract prolipolytic influences under conditions of physiological or pathological increases in beta-oxidation rates. Acts as a low affinity receptor for nicotinic acid. This pharmacological effect requires nicotinic acid doses that are much higher than those provided by a normal diet. The protein is Hydroxycarboxylic acid receptor 3 (HCAR3) of Homo sapiens (Human).